A 208-amino-acid chain; its full sequence is Superoxide dismutase [Mn] 2 (208 aa).

4 residues coordinate Mn(2+): histidine 28, histidine 83, aspartate 165, and histidine 169.

Belongs to the iron/manganese superoxide dismutase family. As to quaternary structure, homodimer. It depends on Mn(2+) as a cofactor.

The catalysed reaction is 2 superoxide + 2 H(+) = H2O2 + O2. In terms of biological role, destroys superoxide anion radicals which are normally produced within the cells and which are toxic to biological systems. This is Superoxide dismutase [Mn] 2 (sodA2) from Bacillus anthracis.